The chain runs to 553 residues: COP9 signalosome complex subunit 10 (553 aa).

Residues alanine 21 to proline 46 are compositionally biased toward acidic residues. A disordered region spans residues alanine 21 to leucine 47. The PCI domain occupies leucine 298 to arginine 474.

In terms of assembly, component of a COP9 signalosome-like (CSN) complex.

The protein localises to the cytoplasm. Its subcellular location is the nucleus. Functionally, component of the COP9 signalosome (CSN) complex that acts as an regulator of the ubiquitin (Ubl) conjugation pathway by mediating the deneddylation of the cullin subunit of SCF-type E3 ubiquitin-protein ligase complexes. The CSN complex is involved in the regulation of the mating pheromone response. The sequence is that of COP9 signalosome complex subunit 10 (RRI2) from Eremothecium gossypii (strain ATCC 10895 / CBS 109.51 / FGSC 9923 / NRRL Y-1056) (Yeast).